The following is a 390-amino-acid chain: Probable L-tyrosine/L-aspartate decarboxylase (390 aa).

Lys239 carries the N6-(pyridoxal phosphate)lysine modification.

The protein belongs to the group II decarboxylase family. MfnA subfamily. Pyridoxal 5'-phosphate is required as a cofactor.

It carries out the reaction L-tyrosine + H(+) = tyramine + CO2. It catalyses the reaction L-aspartate + H(+) = beta-alanine + CO2. The protein operates within cofactor biosynthesis; methanofuran biosynthesis. It functions in the pathway cofactor biosynthesis; coenzyme A biosynthesis. In terms of biological role, catalyzes the decarboxylation of L-tyrosine to produce tyramine for methanofuran biosynthesis. Can also catalyze the decarboxylation of L-aspartate to produce beta-alanine for coenzyme A (CoA) biosynthesis. The polypeptide is Probable L-tyrosine/L-aspartate decarboxylase (Methanococcus aeolicus (strain ATCC BAA-1280 / DSM 17508 / OCM 812 / Nankai-3)).